We begin with the raw amino-acid sequence, 217 residues long: MTFRAQMLDTLTSQSSRDLEAQALGLVPIVVETSGRGERSYDIYSRLLKERIVFLVGEVNDQTANLVVAQMLFLESENPDKDISFYINSPGGSVSAGMAIYDTMQFIKPDVSTLCMGLAASMGAFLLAAGAKGKRFALPNSRVMIHQPLGGARGQASDIEIQAREILYLKERLNHLLAHHTGQPVERIARDTDRDNFMSGDDAQAYGLVDQVAHKRP.

Serine 121 acts as the Nucleophile in catalysis. Histidine 146 is an active-site residue.

Belongs to the peptidase S14 family. As to quaternary structure, fourteen ClpP subunits assemble into 2 heptameric rings which stack back to back to give a disk-like structure with a central cavity, resembling the structure of eukaryotic proteasomes.

It is found in the cytoplasm. It catalyses the reaction Hydrolysis of proteins to small peptides in the presence of ATP and magnesium. alpha-casein is the usual test substrate. In the absence of ATP, only oligopeptides shorter than five residues are hydrolyzed (such as succinyl-Leu-Tyr-|-NHMec, and Leu-Tyr-Leu-|-Tyr-Trp, in which cleavage of the -Tyr-|-Leu- and -Tyr-|-Trp bonds also occurs).. In terms of biological role, cleaves peptides in various proteins in a process that requires ATP hydrolysis. Has a chymotrypsin-like activity. Plays a major role in the degradation of misfolded proteins. The protein is ATP-dependent Clp protease proteolytic subunit 2 of Paraburkholderia xenovorans (strain LB400).